A 206-amino-acid chain; its full sequence is Small ribosomal subunit protein uS4 (206 aa).

In terms of domain architecture, S4 RNA-binding spans 98–164 (MRLDNVVYRL…EKFKTFIENP (67 aa)).

It belongs to the universal ribosomal protein uS4 family. As to quaternary structure, part of the 30S ribosomal subunit. Contacts protein S5. The interaction surface between S4 and S5 is involved in control of translational fidelity.

One of the primary rRNA binding proteins, it binds directly to 16S rRNA where it nucleates assembly of the body of the 30S subunit. Its function is as follows. With S5 and S12 plays an important role in translational accuracy. In Clostridium tetani (strain Massachusetts / E88), this protein is Small ribosomal subunit protein uS4.